A 61-amino-acid chain; its full sequence is Small ribosomal subunit protein uS14 (61 aa).

C24, C27, C40, and C43 together coordinate Zn(2+).

This sequence belongs to the universal ribosomal protein uS14 family. Zinc-binding uS14 subfamily. Part of the 30S ribosomal subunit. Contacts proteins S3 and S10. Requires Zn(2+) as cofactor.

Its function is as follows. Binds 16S rRNA, required for the assembly of 30S particles and may also be responsible for determining the conformation of the 16S rRNA at the A site. This Clostridium botulinum (strain Alaska E43 / Type E3) protein is Small ribosomal subunit protein uS14.